Reading from the N-terminus, the 736-residue chain is Catalase-peroxidase 2 (736 aa).

The segment at residues 91–227 (WHSAGTYRMG…LAAVQMGLIY (137 aa)) is a cross-link (tryptophyl-tyrosyl-methioninium (Trp-Tyr) (with M-253)). Residue His-92 is the Proton acceptor of the active site. Positions 227–253 (YVNPEGPDGNPDPVAAAYDIREVFGRM) form a cross-link, tryptophyl-tyrosyl-methioninium (Tyr-Met) (with W-91). A heme b-binding site is contributed by His-268.

This sequence belongs to the peroxidase family. Peroxidase/catalase subfamily. Homodimer or homotetramer. Requires heme b as cofactor. In terms of processing, formation of the three residue Trp-Tyr-Met cross-link is important for the catalase, but not the peroxidase activity of the enzyme.

It catalyses the reaction H2O2 + AH2 = A + 2 H2O. It carries out the reaction 2 H2O2 = O2 + 2 H2O. In terms of biological role, bifunctional enzyme with both catalase and broad-spectrum peroxidase activity. Shows peroxidase specificity towards odianisidine, ABTS and pyrogallol, but methoxyphenol and 2-chloronaphthol are not peroxidized. The sequence is that of Catalase-peroxidase 2 from Burkholderia cenocepacia (strain ATCC BAA-245 / DSM 16553 / LMG 16656 / NCTC 13227 / J2315 / CF5610) (Burkholderia cepacia (strain J2315)).